Here is a 290-residue protein sequence, read N- to C-terminus: Iron-sulfur cluster carrier protein (290 aa).

An ATP-binding site is contributed by 47-54 (GKGGVGKS).

This sequence belongs to the Mrp/NBP35 ATP-binding proteins family. In terms of assembly, homodimer.

Its function is as follows. Binds and transfers iron-sulfur (Fe-S) clusters to target apoproteins. Can hydrolyze ATP. This is Iron-sulfur cluster carrier protein from Methanocaldococcus jannaschii (strain ATCC 43067 / DSM 2661 / JAL-1 / JCM 10045 / NBRC 100440) (Methanococcus jannaschii).